Reading from the N-terminus, the 537-residue chain is Phosphoenolpyruvate carboxykinase (ATP) (537 aa).

Substrate-binding residues include arginine 61, tyrosine 195, and lysine 201. Residues lysine 201, histidine 220, and 236 to 244 (GLSGTGKTT) each bind ATP. Mn(2+)-binding residues include lysine 201 and histidine 220. Aspartate 257 provides a ligand contact to Mn(2+). ATP contacts are provided by glutamate 285, arginine 323, and threonine 448. Arginine 323 is a binding site for substrate.

The protein belongs to the phosphoenolpyruvate carboxykinase (ATP) family. It depends on Mn(2+) as a cofactor.

It is found in the cytoplasm. It catalyses the reaction oxaloacetate + ATP = phosphoenolpyruvate + ADP + CO2. It functions in the pathway carbohydrate biosynthesis; gluconeogenesis. Its function is as follows. Involved in the gluconeogenesis. Catalyzes the conversion of oxaloacetate (OAA) to phosphoenolpyruvate (PEP) through direct phosphoryl transfer between the nucleoside triphosphate and OAA. The protein is Phosphoenolpyruvate carboxykinase (ATP) of Rhodopseudomonas palustris (strain ATCC BAA-98 / CGA009).